A 191-amino-acid chain; its full sequence is Putative 3-methyladenine DNA glycosylase (191 aa).

This sequence belongs to the DNA glycosylase MPG family.

The polypeptide is Putative 3-methyladenine DNA glycosylase (Cutibacterium acnes (strain DSM 16379 / KPA171202) (Propionibacterium acnes)).